Consider the following 297-residue polypeptide: Aspartate carbamoyltransferase catalytic subunit (297 aa).

Carbamoyl phosphate is bound by residues arginine 49 and threonine 50. Lysine 77 contributes to the L-aspartate binding site. The carbamoyl phosphate site is built by arginine 99, histidine 129, and glutamine 132. Positions 162 and 215 each coordinate L-aspartate. Carbamoyl phosphate is bound by residues glycine 256 and proline 257.

This sequence belongs to the aspartate/ornithine carbamoyltransferase superfamily. ATCase family. Heterododecamer (2C3:3R2) of six catalytic PyrB chains organized as two trimers (C3), and six regulatory PyrI chains organized as three dimers (R2).

It catalyses the reaction carbamoyl phosphate + L-aspartate = N-carbamoyl-L-aspartate + phosphate + H(+). The protein operates within pyrimidine metabolism; UMP biosynthesis via de novo pathway; (S)-dihydroorotate from bicarbonate: step 2/3. Functionally, catalyzes the condensation of carbamoyl phosphate and aspartate to form carbamoyl aspartate and inorganic phosphate, the committed step in the de novo pyrimidine nucleotide biosynthesis pathway. In Legionella pneumophila (strain Corby), this protein is Aspartate carbamoyltransferase catalytic subunit.